Consider the following 53-residue polypeptide: Large ribosomal subunit protein eL40 (53 aa).

Belongs to the eukaryotic ribosomal protein eL40 family.

In Pyrobaculum aerophilum (strain ATCC 51768 / DSM 7523 / JCM 9630 / CIP 104966 / NBRC 100827 / IM2), this protein is Large ribosomal subunit protein eL40.